Here is a 688-residue protein sequence, read N- to C-terminus: Elongation factor G (688 aa).

The tr-type G domain maps to 6-280 (KLFRNFGIMA…AVVDFLPSPI (275 aa)). GTP-binding positions include 15 to 22 (AHIDAGKT), 79 to 83 (DTPGH), and 133 to 136 (NKMD).

It belongs to the TRAFAC class translation factor GTPase superfamily. Classic translation factor GTPase family. EF-G/EF-2 subfamily.

It localises to the cytoplasm. Its function is as follows. Catalyzes the GTP-dependent ribosomal translocation step during translation elongation. During this step, the ribosome changes from the pre-translocational (PRE) to the post-translocational (POST) state as the newly formed A-site-bound peptidyl-tRNA and P-site-bound deacylated tRNA move to the P and E sites, respectively. Catalyzes the coordinated movement of the two tRNA molecules, the mRNA and conformational changes in the ribosome. This is Elongation factor G from Ureaplasma urealyticum serovar 10 (strain ATCC 33699 / Western).